We begin with the raw amino-acid sequence, 549 residues long: Oxygen-dependent choline dehydrogenase (549 aa).

Position 4–33 (4–33 (DFVIIGSGSAGSAMAYRLSEDGRYSVIVIE)) interacts with FAD. Histidine 465 acts as the Proton acceptor in catalysis.

This sequence belongs to the GMC oxidoreductase family. Requires FAD as cofactor.

The enzyme catalyses choline + A = betaine aldehyde + AH2. It carries out the reaction betaine aldehyde + NAD(+) + H2O = glycine betaine + NADH + 2 H(+). It functions in the pathway amine and polyamine biosynthesis; betaine biosynthesis via choline pathway; betaine aldehyde from choline (cytochrome c reductase route): step 1/1. In terms of biological role, involved in the biosynthesis of the osmoprotectant glycine betaine. Catalyzes the oxidation of choline to betaine aldehyde and betaine aldehyde to glycine betaine at the same rate. The protein is Oxygen-dependent choline dehydrogenase of Brucella anthropi (strain ATCC 49188 / DSM 6882 / CCUG 24695 / JCM 21032 / LMG 3331 / NBRC 15819 / NCTC 12168 / Alc 37) (Ochrobactrum anthropi).